Reading from the N-terminus, the 272-residue chain is tRNA pseudouridine synthase A (272 aa).

Aspartate 62 (nucleophile) is an active-site residue. Substrate is bound at residue tyrosine 120.

Belongs to the tRNA pseudouridine synthase TruA family. As to quaternary structure, homodimer.

The catalysed reaction is uridine(38/39/40) in tRNA = pseudouridine(38/39/40) in tRNA. Functionally, formation of pseudouridine at positions 38, 39 and 40 in the anticodon stem and loop of transfer RNAs. This chain is tRNA pseudouridine synthase A, found in Nitrosomonas europaea (strain ATCC 19718 / CIP 103999 / KCTC 2705 / NBRC 14298).